The following is a 425-amino-acid chain: L-cysteine:1D-myo-inositol 2-amino-2-deoxy-alpha-D-glucopyranoside ligase (425 aa).

Zn(2+) is bound at residue Cys43. L-cysteinyl-5'-AMP is bound by residues 43–46 (CGIT), Ser58, and 81–83 (NVT). The 'HIGH' region signature appears at 45-55 (ITPYDATHMGH). The 'ERGGDP' region signature appears at 199-204 (ERGGDP). Trp240 contributes to the L-cysteinyl-5'-AMP binding site. Cys244 lines the Zn(2+) pocket. 262–264 (GSD) is an L-cysteinyl-5'-AMP binding site. His269 contacts Zn(2+). Val295 is a binding site for L-cysteinyl-5'-AMP. Positions 301 to 305 (KMSKS) match the 'KMSKS' region motif.

The protein belongs to the class-I aminoacyl-tRNA synthetase family. MshC subfamily. As to quaternary structure, monomer. Zn(2+) is required as a cofactor.

The catalysed reaction is 1D-myo-inositol 2-amino-2-deoxy-alpha-D-glucopyranoside + L-cysteine + ATP = 1D-myo-inositol 2-(L-cysteinylamino)-2-deoxy-alpha-D-glucopyranoside + AMP + diphosphate + H(+). In terms of biological role, catalyzes the ATP-dependent condensation of GlcN-Ins and L-cysteine to form L-Cys-GlcN-Ins. The chain is L-cysteine:1D-myo-inositol 2-amino-2-deoxy-alpha-D-glucopyranoside ligase from Paenarthrobacter aurescens (strain TC1).